A 167-amino-acid polypeptide reads, in one-letter code: Photosystem I assembly protein Ycf3 (167 aa).

TPR repeat units follow at residues 35–68 (AFAYYRDGMSAQSEGEYAEALQNYYEAMRLEVDA), 72–105 (SYILYNIGLIHTSNGEHARALEYYYQALERNPSL), and 120–153 (GEQAIEKGQAEISSLLFDKAADYWKEAIRLAPTN).

The protein belongs to the Ycf3 family.

The protein resides in the plastid. Its subcellular location is the chloroplast thylakoid membrane. Its function is as follows. Essential for the assembly of the photosystem I (PSI) complex. May act as a chaperone-like factor to guide the assembly of the PSI subunits. The chain is Photosystem I assembly protein Ycf3 from Stigeoclonium helveticum (Green alga).